The primary structure comprises 530 residues: Ubiquitin carboxyl-terminal hydrolase 17-like protein 10 (530 aa).

The USP domain occupies 80–375 (AGLQNMGNTC…QAYVLFYIQK (296 aa)). Catalysis depends on cysteine 89, which acts as the Nucleophile. Residue histidine 334 is the Proton acceptor of the active site. 2 stretches are compositionally biased toward basic and acidic residues: residues 382 to 392 (SESVSRGREPR) and 398 to 410 (DTDR…ELKR). Disordered stretches follow at residues 382–410 (SESV…ELKR) and 477–530 (NHHP…LVCQ). The span at 484–495 (SSLLNLSSTTPT) shows a compositional bias: low complexity. Positions 496 to 505 (DQESMNTGTL) are enriched in polar residues. A compositionally biased stretch (basic residues) spans 510–524 (GRTRRSKGKNKHSKR).

Belongs to the peptidase C19 family. USP17 subfamily.

It is found in the nucleus. The protein localises to the endoplasmic reticulum. The catalysed reaction is Thiol-dependent hydrolysis of ester, thioester, amide, peptide and isopeptide bonds formed by the C-terminal Gly of ubiquitin (a 76-residue protein attached to proteins as an intracellular targeting signal).. In terms of biological role, deubiquitinating enzyme that removes conjugated ubiquitin from specific proteins to regulate different cellular processes that may include cell proliferation, progression through the cell cycle, apoptosis, cell migration, and the cellular response to viral infection. This Homo sapiens (Human) protein is Ubiquitin carboxyl-terminal hydrolase 17-like protein 10 (USP17L10).